The chain runs to 204 residues: NAD(P)H-quinone oxidoreductase subunit M, chloroplastic (204 aa).

A chloroplast-targeting transit peptide spans 1–27; the sequence is MASTSMSLTRACKVHAVLACSIPSVSS.

It belongs to the NDH complex subunit M family. Part of the chloroplast NDH complex, composed of a mixture of chloroplast and nucleus encoded subunits. Component of the NDH subcomplex A, at least composed of ndhH, ndhI, ndhJ, ndhK, ndhL, ndhM, ndhN and ndhO.

The protein resides in the plastid. It localises to the chloroplast thylakoid membrane. The catalysed reaction is a plastoquinone + NADH + (n+1) H(+)(in) = a plastoquinol + NAD(+) + n H(+)(out). It catalyses the reaction a plastoquinone + NADPH + (n+1) H(+)(in) = a plastoquinol + NADP(+) + n H(+)(out). Functionally, NDH shuttles electrons from NAD(P)H:plastoquinone, via FMN and iron-sulfur (Fe-S) centers, to quinones in the photosynthetic chain and possibly in a chloroplast respiratory chain. The immediate electron acceptor for the enzyme in this species is believed to be plastoquinone. Couples the redox reaction to proton translocation, and thus conserves the redox energy in a proton gradient. The protein is NAD(P)H-quinone oxidoreductase subunit M, chloroplastic of Physcomitrium patens (Spreading-leaved earth moss).